A 207-amino-acid chain; its full sequence is Probable glutathione S-transferase 5 (207 aa).

Residues 2 to 81 (VSYKLTYFNG…FLAREFKLNG (80 aa)) enclose the GST N-terminal domain. Glutathione contacts are provided by residues tyrosine 8, tryptophan 39, lysine 43, 51 to 53 (GQL), and 65 to 66 (QS). Residues 83-207 (TAWEEAQVNS…WIETRPVTPF (125 aa)) enclose the GST C-terminal domain.

The protein belongs to the GST superfamily. Sigma family.

The catalysed reaction is RX + glutathione = an S-substituted glutathione + a halide anion + H(+). In terms of biological role, conjugation of reduced glutathione to a wide number of exogenous and endogenous hydrophobic electrophiles. May play a role in the detoxification of reactive oxygen species produced during pathogenic bacterial infection. This chain is Probable glutathione S-transferase 5 (gst-5), found in Caenorhabditis elegans.